The chain runs to 770 residues: DEAD-box ATP-dependent RNA helicase 24 (770 aa).

Residues 1–106 (MSKRPKLGGF…ADSDDEDDPV (106 aa)) are disordered. The span at 14 to 26 (RPTSYSFERSQPP) shows a compositional bias: polar residues. Over residues 34–43 (DDPDLDDIAF) the composition is skewed to acidic residues. Low complexity predominate over residues 44-55 (SDDAAAPSDAPP). Residues 219-247 (KSFADCGFPVQLMNAIAKQGYEKPTTIQC) carry the Q motif motif. The region spanning 250-425 (LPIVLSGRDI…REILTDPIRV (176 aa)) is the Helicase ATP-binding domain. 263-270 (AKTGSGKT) contributes to the ATP binding site. The short motif at 373 to 376 (DEAD) is the DEAD box element. One can recognise a Helicase C-terminal domain in the interval 436 to 599 (DIKQVVNVLP…DVPNELMDLA (164 aa)). Residues 604–613 (RFRANRDSRK) show a composition bias toward basic and acidic residues. 3 disordered regions span residues 604 to 640 (RFRA…RGRG), 683 to 704 (VSAS…PSSF), and 729 to 770 (LPAP…GWDR). Over residues 621–635 (GKGGGGGGGGGSGAR) the composition is skewed to gly residues. Positions 683 to 697 (VSASSSNTPSNSAPS) are enriched in low complexity. Polar residues predominate over residues 744–753 (TVENANPNPE). Residues 754–770 (SSRDRTRERKRPSGWDR) show a composition bias toward basic and acidic residues.

The protein belongs to the DEAD box helicase family.

The enzyme catalyses ATP + H2O = ADP + phosphate + H(+). This chain is DEAD-box ATP-dependent RNA helicase 24, found in Oryza sativa subsp. japonica (Rice).